The following is a 204-amino-acid chain: Tetraspanin-13 (204 aa).

The Cytoplasmic segment spans residues 1–19; sequence MVCGGFSCSKNCLCALNLL. Residues 20–40 traverse the membrane as a helical segment; sequence YTLVSLLLIGIAAWGIGFGLI. At 41-44 the chain is on the extracellular side; it reads SSLR. The helical transmembrane segment at 45–65 threads the bilayer; the sequence is VVGVVIAVGIFLFLIALVGLI. Topologically, residues 66 to 72 are cytoplasmic; that stretch reads GAVKHHQ. Residues 73-93 traverse the membrane as a helical segment; that stretch reads VLLFFYMIILLLVFIVQFSVS. The Extracellular segment spans residues 94-167; the sequence is CACLALNREQ…IGEYAGEVLR (74 aa). N-linked (GlcNAc...) asparagine glycosylation is found at asparagine 113 and asparagine 137. Serine 143 bears the Phosphoserine mark. A helical transmembrane segment spans residues 168-188; the sequence is FVGGIGLFFSFTEILGVWLTY. The Cytoplasmic segment spans residues 189–204; that stretch reads RYRNQKDPRANPSAFL.

Belongs to the tetraspanin (TM4SF) family.

It localises to the membrane. The chain is Tetraspanin-13 (Tspan13) from Rattus norvegicus (Rat).